Consider the following 204-residue polypeptide: Demethylsterigmatocystin 6-O-methyltransferase stcP (204 aa).

Residues 48–49 (GG), Asp-73, 93–94 (DF), and Arg-109 contribute to the S-adenosyl-L-methionine site. His-113 serves as the catalytic Proton acceptor.

It belongs to the class I-like SAM-binding methyltransferase superfamily. Cation-independent O-methyltransferase family.

It catalyses the reaction 6-demethylsterigmatocystin + S-adenosyl-L-methionine = sterigmatocystin + S-adenosyl-L-homocysteine + H(+). It participates in mycotoxin biosynthesis; sterigmatocystin biosynthesis. In terms of biological role, norsolorinic acid reductase; part of the gene cluster that mediates the biosynthesis of sterigmatocystin (ST), a polyketide-derived furanocoumarin which is part of the most toxic and carcinogenic compounds among the known mycotoxins. The first step in the biosynthesis of sterigmatocystin is the production of hexanoate by the fatty acid synthase (FAS) units stcJ and stcK. The polyketide backbone is assembled by the non-reducing polyketide synthase stcA by condensation of the starter hexanoyl-CoA and 7 malonyl-CoA extender units followed by cyclization and release of norsolorinic acid. Norsolorinic acid is the first stable intermediate in the biosynthesis of sterigmatocystin and is converted into averantin (AVN) by the ketoreductase stcE which reduces the hexanoate ketone to an alcohol. Averantin is then oxidized into 5'-hydroxyaverantin (HAVN) by the cytochrome P450 monooxygenase stcF. 5'-hydroxyaverantin is further converted to 5'-oxyaverantin (OAVN) by the 5'-hydroxyaverantin dehydrogenase stcG. The next step is the conversion of OAVN into averufin (AVF) which is catalyzed by a yet to be identified enzyme. The cytochrome P450 monooxygenase stcB and the flavin-binding monooxygenase stcW are both required for the conversion of averufin to 1-hydroxyversicolorone. The esterase stcI probably catalyzes the formation of versiconal hemiacetal acetate from 1-hydroxyversicolorone. The oxydoreductase stcN then probably catalyzes the biosynthetic step from versiconal to versicolorin B (VERB). The next step is performed by the versicolorin B desaturase stcL to produce versicolorin A (VERA). The ketoreductase stcU and the cytochrome P450 monooxygenase stcS are involved in the conversion of versicolorin A to demethylsterigmatocystin. The Baeyer-Villiger oxidas stcQ and the reductase stcR might be involved in the biosynthetic step from versicolorin A to demethylsterigmatocystin. The final step in the biosynthesis of sterigmatocystin is the methylation of demethylsterigmatocystin catalyzed by the methyltransferase stcP. The chain is Demethylsterigmatocystin 6-O-methyltransferase stcP from Emericella nidulans (strain FGSC A4 / ATCC 38163 / CBS 112.46 / NRRL 194 / M139) (Aspergillus nidulans).